Here is a 163-residue protein sequence, read N- to C-terminus: Small ribosomal subunit protein uS9 (163 aa).

The segment covering 1–11 (MAENTNDSQVV) has biased composition (polar residues). A disordered region spans residues 1–40 (MAENTNDSQVVETEEELTNYTTETNAGAGTGTSAIEPGYG). The span at 18–27 (TNYTTETNAG) shows a compositional bias: low complexity.

It belongs to the universal ribosomal protein uS9 family.

The protein is Small ribosomal subunit protein uS9 of Bifidobacterium longum (strain DJO10A).